Here is a 304-residue protein sequence, read N- to C-terminus: ATP synthase gamma chain (304 aa).

It belongs to the ATPase gamma chain family. F-type ATPases have 2 components, CF(1) - the catalytic core - and CF(0) - the membrane proton channel. CF(1) has five subunits: alpha(3), beta(3), gamma(1), delta(1), epsilon(1). CF(0) has three main subunits: a, b and c.

The protein localises to the cell membrane. Its function is as follows. Produces ATP from ADP in the presence of a proton gradient across the membrane. The gamma chain is believed to be important in regulating ATPase activity and the flow of protons through the CF(0) complex. The protein is ATP synthase gamma chain of Chloroherpeton thalassium (strain ATCC 35110 / GB-78).